The primary structure comprises 401 residues: Mannan endo-1,4-beta-mannosidase 3 (401 aa).

An N-terminal signal peptide occupies residues 1 to 24 (MSYTHRRSCISGLFLLLLALSCEA). Residues W84 and N198 each contribute to the substrate site. The Proton donor role is filled by E199. Y277 contacts substrate. Catalysis depends on E317, which acts as the Nucleophile. A substrate-binding site is contributed by W356.

Belongs to the glycosyl hydrolase 5 (cellulase A) family.

The protein resides in the secreted. The enzyme catalyses Random hydrolysis of (1-&gt;4)-beta-D-mannosidic linkages in mannans, galactomannans and glucomannans.. The chain is Mannan endo-1,4-beta-mannosidase 3 (MAN3) from Solanum lycopersicum (Tomato).